We begin with the raw amino-acid sequence, 481 residues long: Protein nucleotidyltransferase YdiU (481 aa).

8 residues coordinate ATP: glycine 87, glycine 89, arginine 90, lysine 110, aspartate 122, glycine 123, arginine 173, and arginine 180. The active-site Proton acceptor is the aspartate 249. Residues asparagine 250 and aspartate 259 each contribute to the Mg(2+) site. Residue aspartate 259 participates in ATP binding.

It belongs to the SELO family. Mg(2+) is required as a cofactor. Mn(2+) serves as cofactor.

It carries out the reaction L-seryl-[protein] + ATP = 3-O-(5'-adenylyl)-L-seryl-[protein] + diphosphate. It catalyses the reaction L-threonyl-[protein] + ATP = 3-O-(5'-adenylyl)-L-threonyl-[protein] + diphosphate. The catalysed reaction is L-tyrosyl-[protein] + ATP = O-(5'-adenylyl)-L-tyrosyl-[protein] + diphosphate. The enzyme catalyses L-histidyl-[protein] + UTP = N(tele)-(5'-uridylyl)-L-histidyl-[protein] + diphosphate. It carries out the reaction L-seryl-[protein] + UTP = O-(5'-uridylyl)-L-seryl-[protein] + diphosphate. It catalyses the reaction L-tyrosyl-[protein] + UTP = O-(5'-uridylyl)-L-tyrosyl-[protein] + diphosphate. In terms of biological role, nucleotidyltransferase involved in the post-translational modification of proteins. It can catalyze the addition of adenosine monophosphate (AMP) or uridine monophosphate (UMP) to a protein, resulting in modifications known as AMPylation and UMPylation. The sequence is that of Protein nucleotidyltransferase YdiU from Mycobacterium sp. (strain KMS).